The following is a 165-amino-acid chain: Protein-export protein SecB (165 aa).

The protein belongs to the SecB family. As to quaternary structure, homotetramer, a dimer of dimers. One homotetramer interacts with 1 SecA dimer.

Its subcellular location is the cytoplasm. In terms of biological role, one of the proteins required for the normal export of preproteins out of the cell cytoplasm. It is a molecular chaperone that binds to a subset of precursor proteins, maintaining them in a translocation-competent state. It also specifically binds to its receptor SecA. The protein is Protein-export protein SecB of Ruegeria pomeroyi (strain ATCC 700808 / DSM 15171 / DSS-3) (Silicibacter pomeroyi).